Here is a 291-residue protein sequence, read N- to C-terminus: U7 snRNA-associated Sm-like protein LSm11 (291 aa).

The segment at 55-84 is disordered; the sequence is ARGRARGAQRGQSRGPGGKRKGRKPEPDPE. The 76-residue stretch at 124-199 folds into the Sm domain; sequence SPLGELNRCV…LTLTRLFDRL (76 aa). An SM region spans residues 155-289; sequence GFIVAFDKFW…RGENVLLVHI (135 aa). The tract at residues 203 to 266 is disordered; that stretch reads EPGSHDPAKG…RRNRKEKVDY (64 aa). The span at 251–261 shows a compositional bias: basic residues; it reads NRPKQRRRNRK.

It belongs to the snRNP Sm proteins family. Component of the heptameric ring U7 snRNP complex.

It localises to the nucleus. Its function is as follows. Component of the U7 snRNP complex that is involved in the histone 3'-end pre-mRNA processing. Increases U7 snRNA levels but not histone 3'-end pre-mRNA processing activity, when overexpressed. Binds specifically to the Sm-binding site of U7 snRNA. In Xenopus laevis (African clawed frog), this protein is U7 snRNA-associated Sm-like protein LSm11.